A 439-amino-acid chain; its full sequence is tRNA modification GTPase MnmE (439 aa).

Residues Arg-23, Glu-80, and Lys-120 each coordinate (6S)-5-formyl-5,6,7,8-tetrahydrofolate. One can recognise a TrmE-type G domain in the interval 217-365 (GLKIVIAGEP…LLTALQSHLP (149 aa)). Asn-227 contacts K(+). Residues 227–232 (NAGKSS), 246–252 (TEVAGTT), and 271–274 (DTAG) contribute to the GTP site. Ser-231 is a binding site for Mg(2+). Thr-246, Val-248, and Thr-251 together coordinate K(+). Thr-252 is a binding site for Mg(2+). Lys-439 contacts (6S)-5-formyl-5,6,7,8-tetrahydrofolate.

This sequence belongs to the TRAFAC class TrmE-Era-EngA-EngB-Septin-like GTPase superfamily. TrmE GTPase family. As to quaternary structure, homodimer. Heterotetramer of two MnmE and two MnmG subunits. K(+) serves as cofactor.

The protein resides in the cytoplasm. In terms of biological role, exhibits a very high intrinsic GTPase hydrolysis rate. Involved in the addition of a carboxymethylaminomethyl (cmnm) group at the wobble position (U34) of certain tRNAs, forming tRNA-cmnm(5)s(2)U34. In Rhizobium meliloti (strain 1021) (Ensifer meliloti), this protein is tRNA modification GTPase MnmE.